The chain runs to 264 residues: S-adenosylmethionine decarboxylase proenzyme (264 aa).

Serine 112 functions as the Schiff-base intermediate with substrate; via pyruvic acid in the catalytic mechanism. A Pyruvic acid (Ser); by autocatalysis modification is found at serine 112. The active-site Proton acceptor; for processing activity is the histidine 117. Cysteine 140 serves as the catalytic Proton donor; for catalytic activity.

It belongs to the prokaryotic AdoMetDC family. Type 2 subfamily. Heterooctamer of four alpha and four beta chains arranged as a tetramer of alpha/beta heterodimers. It depends on pyruvate as a cofactor. Post-translationally, is synthesized initially as an inactive proenzyme. Formation of the active enzyme involves a self-maturation process in which the active site pyruvoyl group is generated from an internal serine residue via an autocatalytic post-translational modification. Two non-identical subunits are generated from the proenzyme in this reaction, and the pyruvate is formed at the N-terminus of the alpha chain, which is derived from the carboxyl end of the proenzyme. The post-translation cleavage follows an unusual pathway, termed non-hydrolytic serinolysis, in which the side chain hydroxyl group of the serine supplies its oxygen atom to form the C-terminus of the beta chain, while the remainder of the serine residue undergoes an oxidative deamination to produce ammonia and the pyruvoyl group blocking the N-terminus of the alpha chain.

The catalysed reaction is S-adenosyl-L-methionine + H(+) = S-adenosyl 3-(methylsulfanyl)propylamine + CO2. The protein operates within amine and polyamine biosynthesis; S-adenosylmethioninamine biosynthesis; S-adenosylmethioninamine from S-adenosyl-L-methionine: step 1/1. Catalyzes the decarboxylation of S-adenosylmethionine to S-adenosylmethioninamine (dcAdoMet), the propylamine donor required for the synthesis of the polyamines spermine and spermidine from the diamine putrescine. The chain is S-adenosylmethionine decarboxylase proenzyme from Salmonella agona (strain SL483).